Consider the following 171-residue polypeptide: Shikimate kinase (171 aa).

14-19 (GAGKST) contributes to the ATP binding site. Mg(2+) is bound at residue S18. Residues D36, R60, and G82 each coordinate substrate. R120 is a binding site for ATP. R139 is a substrate binding site. Residue Q156 coordinates ATP.

The protein belongs to the shikimate kinase family. Monomer. Requires Mg(2+) as cofactor.

It is found in the cytoplasm. The catalysed reaction is shikimate + ATP = 3-phosphoshikimate + ADP + H(+). Its pathway is metabolic intermediate biosynthesis; chorismate biosynthesis; chorismate from D-erythrose 4-phosphate and phosphoenolpyruvate: step 5/7. Functionally, catalyzes the specific phosphorylation of the 3-hydroxyl group of shikimic acid using ATP as a cosubstrate. The sequence is that of Shikimate kinase from Shewanella sp. (strain MR-4).